Reading from the N-terminus, the 176-residue chain is Telomerase RNA component interacting RNase (176 aa).

Residues 1–12 show a composition bias toward basic and acidic residues; it reads MAARGRRAEPQG. The tract at residues 1-121 is disordered; that stretch reads MAARGRRAEP…TLSFVGKRRG (121 aa). Over residues 45-56 the composition is skewed to low complexity; it reads SGAGSSPVSGGV. Over residues 68 to 83 the composition is skewed to basic and acidic residues; that stretch reads LFKRKMEEEQRQRQEE. Residues 90 to 101 show a composition bias toward low complexity; that stretch reads RPDQSAAAAGPG. Lys-146 carries the post-translational modification N6-acetyllysine.

Part of the telomerase RNA 3' end complex which contains about 488 proteins.

Zn(2+) inhibits the RNase activity while Mg(2+), Ca(2+), Mn(2+), K(+), Na(+), EDTA and EGTA show little effect on the exoribonuclease activity. Its function is as follows. Exoribonuclease that is part of the telomerase RNA 3' end processing complex and which has the ability to cleave all four unpaired RNA nucleotides from the 5' end or 3' end with higher efficiency for purine bases. This is Telomerase RNA component interacting RNase from Homo sapiens (Human).